The following is a 152-amino-acid chain: Sec-independent protein translocase protein TatB (152 aa).

Residues 1–21 (MFDLGWSELLVIGVVALIVVG) form a helical membrane-spanning segment.

This sequence belongs to the TatB family. In terms of assembly, the Tat system comprises two distinct complexes: a TatABC complex, containing multiple copies of TatA, TatB and TatC subunits, and a separate TatA complex, containing only TatA subunits. Substrates initially bind to the TatABC complex, which probably triggers association of the separate TatA complex to form the active translocon.

It is found in the cell inner membrane. In terms of biological role, part of the twin-arginine translocation (Tat) system that transports large folded proteins containing a characteristic twin-arginine motif in their signal peptide across membranes. Together with TatC, TatB is part of a receptor directly interacting with Tat signal peptides. TatB may form an oligomeric binding site that transiently accommodates folded Tat precursor proteins before their translocation. The polypeptide is Sec-independent protein translocase protein TatB (Ruegeria pomeroyi (strain ATCC 700808 / DSM 15171 / DSS-3) (Silicibacter pomeroyi)).